Here is a 318-residue protein sequence, read N- to C-terminus: MPMINLLLLIMSILIAMAFLMLTERKILGHTQLRKGPNIVGPYGLLQPFADALKLFTKEPLKPSTSTITLYIISPALALTIALLLWTPLPMPIPLINLNLGLLFILAASSLTVYSILWSGWASNSNYALIGALRAVAQTISYEITLALILLSVLLMSGSFNLSALITTQEHSWLLLPSWPLALMWFISTLAETNRAPFDLTEGESELVSGFNTEYAAGPFALFFMAEYTNIILMNALTTMIFLGTTFNIHSPELYTTLFTIKTLLLTSLFLWIRSTYPRFRYDQLMHLLWKNFLPLTLALLMWHISVPIATSGIPPQT.

Helical transmembrane passes span 2 to 22, 76 to 96, 100 to 120, 146 to 166, 171 to 191, 222 to 242, 253 to 273, and 294 to 314; these read PMINLLLLIMSILIAMAFLML, ALALTIALLLWTPLPMPIPLI, LGLLFILAASSLTVYSILWSG, LALILLSVLLMSGSFNLSALI, HSWLLLPSWPLALMWFISTLA, LFFMAEYTNIILMNALTTMIF, ELYTTLFTIKTLLLTSLFLWI, and LPLTLALLMWHISVPIATSGI.

It belongs to the complex I subunit 1 family. Core subunit of respiratory chain NADH dehydrogenase (Complex I) which is composed of 45 different subunits.

It localises to the mitochondrion inner membrane. It catalyses the reaction a ubiquinone + NADH + 5 H(+)(in) = a ubiquinol + NAD(+) + 4 H(+)(out). Its function is as follows. Core subunit of the mitochondrial membrane respiratory chain NADH dehydrogenase (Complex I) which catalyzes electron transfer from NADH through the respiratory chain, using ubiquinone as an electron acceptor. Essential for the catalytic activity and assembly of complex I. This chain is NADH-ubiquinone oxidoreductase chain 1 (MT-ND1), found in Pongo abelii (Sumatran orangutan).